The primary structure comprises 1238 residues: Virulence sensor protein BvgS (1238 aa).

Positions 1-32 are cleaved as a signal peptide; sequence MPAPHRLYPRSLICLAQALLVWALLAWAPAQA. Residues 33-307 are Cytoplasmic-facing; that stretch reads SQELTLVGKA…REQQWMANHP (275 aa). The helical transmembrane segment at 308–331 threads the bilayer; that stretch reads VVKVAVLNLFAPFTLFRTDEQFGG. Topologically, residues 332–541 are periplasmic; that stretch reads ISAAVLQLLQ…PRTWYAYRNE (210 aa). The chain crosses the membrane as a helical span at residues 542–563; sequence IYLLIGLGLLSALLFLSWIVYL. Residues 564–1238 lie on the Cytoplasmic side of the membrane; sequence RRQIRQRKRA…LEQRPHQGQP (675 aa). The region spanning 580–651 is the PAS domain; that stretch reads QLEFMRVLID…MHEFLLTRMA (72 aa). Residues 652 to 708 form the PAC domain; sequence AEREPRFEDRDVTLHGRTRHVYQWTVPYGDSLGELKGIIGGWIDITERAELLRELHD. Residues 726–948 form the Histidine kinase domain; it reads TMSHEIRTPM…TVSVDLRLTM (223 aa). Position 729 is a phosphohistidine; by autocatalysis (His-729). The 122-residue stretch at 974 to 1095 folds into the Response regulatory domain; sequence RVLVVDDHKP…ALRQRLNEAA (122 aa). Residue Asp-1023 is modified to 4-aspartylphosphate. Residues 1133 to 1228 enclose the HPt domain; that stretch reads DEALIRQLLE…AALETQLRAW (96 aa). At His-1172 the chain carries Phosphohistidine.

Post-translationally, activation requires a sequential transfer of a phosphate group from a His in the primary transmitter domain, to an Asp in the receiver domain and to a His in the secondary transmitter domain.

The protein resides in the cell inner membrane. It carries out the reaction ATP + protein L-histidine = ADP + protein N-phospho-L-histidine.. Its function is as follows. Member of the two-component regulatory system BvgS/BvgA. Phosphorylates BvgA via a four-step phosphorelay in response to environmental signals. The polypeptide is Virulence sensor protein BvgS (bvgS) (Bordetella parapertussis (strain 12822 / ATCC BAA-587 / NCTC 13253)).